We begin with the raw amino-acid sequence, 183 residues long: uncharacterized protein (183 aa).

This is an uncharacterized protein from Shigella flexneri.